The sequence spans 340 residues: Phenylalanine--tRNA ligase alpha subunit (340 aa).

A Mg(2+)-binding site is contributed by glutamate 255.

The protein belongs to the class-II aminoacyl-tRNA synthetase family. Phe-tRNA synthetase alpha subunit type 1 subfamily. Tetramer of two alpha and two beta subunits. It depends on Mg(2+) as a cofactor.

Its subcellular location is the cytoplasm. The catalysed reaction is tRNA(Phe) + L-phenylalanine + ATP = L-phenylalanyl-tRNA(Phe) + AMP + diphosphate + H(+). The polypeptide is Phenylalanine--tRNA ligase alpha subunit (Heliobacterium modesticaldum (strain ATCC 51547 / Ice1)).